The following is a 1970-amino-acid chain: DNA-directed RNA polymerase II subunit RPB1 (1970 aa).

Met1 carries the post-translational modification N-acetylmethionine. Ser27 carries the phosphoserine modification. An RNA-binding site is contributed by Arg67. 8 residues coordinate Zn(2+): Cys71, Cys74, Cys81, His84, Cys111, Cys114, Cys154, and Cys184. Ser217 carries the post-translational modification Phosphoserine. DNA-binding residues include Lys346 and Arg358. Arg460 provides a ligand contact to RNA. The Mg(2+) site is built by Asn493, Asp495, Asp497, and Asp499. Asp499 contacts RNA. Residues 832 to 873 (TPTEFFFHAMGGREGLIDTAVKTAETGYIQRRLIKSMESVMV) are bridging helix. The interval 1083–1124 (PGEMVGALAAQSLGEPATQMTLNTFHYAGVSAKNVTLGVPRL) is trigger loop. A Glycyl lysine isopeptide (Lys-Gly) (interchain with G-Cter in ubiquitin); by NEDD4 cross-link involves residue Lys1268. DNA-binding residues include Arg1416 and Arg1421. Low complexity predominate over residues 1546 to 1568 (FSPSAASDASGFSPGYSPAWSPT). The disordered stretch occupies residues 1546–1970 (FSPSAASDAS…ISPDDSDDEN (425 aa)). Positions 1569 to 1583 (PGSPGSPGPSSPYIP) are enriched in pro residues. Repeat unit 1 spans residues 1593 to 1599 (YSPTSPA). Residues 1593–1960 (YSPTSPAYEP…SPTYSLTSPA (368 aa)) are C-terminal domain (CTD); 52 X 7 AA approximate tandem repeats of Y-[ST]-P-[STQ]-[ST]-P-[SRTEVKGN]. Residues 1600-1606 (YEPRSPG) form a 2; approximate repeat. Arg1603 is subject to Omega-N-methylated arginine. Repeat copies occupy residues 1608–1614 (YTPQSPS), 1615–1621 (YSPTSPS), 1622–1628 (YSPTSPS), 1629–1635 (YSPTSPN), 1636–1642 (YSPTSPS), 1643–1649 (YSPTSPS), 1650–1656 (YSPTSPS), 1657–1663 (YSPTSPS), 1664–1670 (YSPTSPS), 1671–1677 (YSPTSPS), 1678–1684 (YSPTSPS), 1685–1691 (YSPTSPS), 1692–1698 (YSPTSPS), 1699–1705 (YSPTSPS), 1706–1712 (YSPTSPS), 1713–1719 (YSPTSPS), 1720–1726 (YSPTSPS), 1727–1733 (YSPTSPS), 1734–1740 (YSPTSPS), 1741–1747 (YSPTSPN), 1748–1754 (YSPTSPN), 1755–1761 (YTPTSPS), 1762–1768 (YSPTSPS), 1769–1775 (YSPTSPN), 1776–1782 (YTPTSPN), 1783–1789 (YSPTSPS), 1790–1796 (YSPTSPS), 1797–1803 (YSPTSPS), 1804–1810 (YSPSSPR), 1811–1817 (YTPQSPT), 1818–1824 (YTPSSPS), 1825–1831 (YSPSSPS), 1832–1838 (YSPTSPK), 1839–1845 (YTPTSPS), 1846–1852 (YSPSSPE), 1853–1859 (YTPTSPK), 1860–1866 (YSPTSPK), 1867–1873 (YSPTSPK), 1874–1880 (YSPTSPT), 1881–1887 (YSPTTPK), 1888–1894 (YSPTSPT), 1895–1901 (YSPTSPV), 1902–1908 (YTPTSPK), 1909–1915 (YSPTSPT), 1916–1922 (YSPTSPK), 1923–1929 (YSPTSPT), 1930–1936 (YSPTSPK), and 1940–1946 (YSPTSPG). A compositionally biased stretch (low complexity) spans 1608–1959 (YTPQSPSYSP…TSPTYSLTSP (352 aa)). Asymmetric dimethylarginine; alternate is present on Arg1810. Arg1810 carries the symmetric dimethylarginine; alternate modification. Lys1838 carries the post-translational modification N6,N6-dimethyllysine; alternate. The residue at position 1838 (Lys1838) is an N6-methyllysine; alternate. Thr1840 is subject to Phosphothreonine. Phosphoserine is present on residues Ser1843, Ser1845, Ser1847, Ser1849, and Ser1850. The residue at position 1854 (Thr1854) is a Phosphothreonine. Ser1857 carries the post-translational modification Phosphoserine. At Lys1859 the chain carries N6,N6-dimethyllysine; alternate. Lys1859 bears the N6-methyllysine; alternate mark. Phosphotyrosine is present on Tyr1860. Position 1861 is a phosphoserine (Ser1861). Position 1863 is a phosphothreonine (Thr1863). Phosphoserine is present on Ser1864. An N6,N6-dimethyllysine; alternate modification is found at Lys1866. Residue Lys1866 is modified to N6-methyllysine; alternate. At Lys1866 the chain carries N6,N6,N6-trimethyllysine; alternate. Lys1866 is subject to N6-acetyllysine; alternate. The residue at position 1867 (Tyr1867) is a Phosphotyrosine. Phosphoserine is present on Ser1868. Thr1870 bears the Phosphothreonine mark. Residue Lys1873 is modified to N6,N6-dimethyllysine; alternate. An N6-methyllysine; alternate modification is found at Lys1873. Position 1873 is an N6,N6,N6-trimethyllysine; alternate (Lys1873). Tyr1874 is subject to Phosphotyrosine. Ser1875 is subject to Phosphoserine. A Phosphothreonine modification is found at Thr1877. The residue at position 1878 (Ser1878) is a Phosphoserine. Tyr1881 is subject to Phosphotyrosine. Ser1882 carries the post-translational modification Phosphoserine. The residue at position 1885 (Thr1885) is a Phosphothreonine. Position 1887 is an N6,N6-dimethyllysine; alternate (Lys1887). Lys1887 carries the N6-methyllysine; alternate modification. At Lys1887 the chain carries N6-acetyllysine; alternate. Thr1894 carries the post-translational modification Phosphothreonine. 3 positions are modified to phosphoserine: Ser1896, Ser1899, and Ser1906. The residue at position 1908 (Lys1908) is an N6,N6-dimethyllysine. Position 1909 is a phosphotyrosine (Tyr1909). Thr1912 carries the post-translational modification Phosphothreonine. Ser1913 carries the post-translational modification Phosphoserine. At Thr1915 the chain carries Phosphothreonine. At Tyr1916 the chain carries Phosphotyrosine. Position 1917 is a phosphoserine (Ser1917). At Thr1919 the chain carries Phosphothreonine. At Ser1920 the chain carries Phosphoserine. Position 1922 is an N6,N6-dimethyllysine; alternate (Lys1922). N6-methyllysine; alternate is present on Lys1922. Residue Lys1922 is modified to N6-acetyllysine; alternate. Tyr1923 is modified (phosphotyrosine). Thr1926 carries the post-translational modification Phosphothreonine. Ser1927 is modified (phosphoserine). Thr1929 is modified (phosphothreonine). Residue Tyr1930 is modified to Phosphotyrosine. Phosphoserine is present on Ser1931. Position 1933 is a phosphothreonine (Thr1933). A Phosphoserine modification is found at Ser1934. An N6,N6-dimethyllysine; alternate modification is found at Lys1936. N6-methyllysine; alternate is present on Lys1936. Lys1936 carries the N6-acetyllysine; alternate modification. The stretch at 1947 to 1953 (YSPTSPT) is one 51; approximate repeat. A 52; approximate repeat occupies 1954–1960 (YSLTSPA).

The protein belongs to the RNA polymerase beta' chain family. Component of the RNA polymerase II (Pol II) core complex consisting of 12 subunits: a ten-subunit catalytic core composed of POLR2A/RPB1, POLR2B/RPB2, POLR2C/RPB3, POLR2I/RPB9, POLR2J/RPB11, POLR2E/RPABC1, POLR2F/RPABC2, POLR2H/RPABC3, POLR2K/RPABC4 and POLR2L/RPABC5 and a mobile stalk composed of two subunits POLR2D/RPB4 and POLR2G/RPB7, protruding from the core and functioning primarily in transcription initiation. Part of Pol II(G) complex, in which Pol II core associates with an additional subunit POLR2M; unlike conventional Pol II, Pol II(G) functions as a transcriptional repressor. Part of Pol II pre-initiation complex (PIC), in which Pol II core assembles with Mediator, general transcription factors and other specific initiation factors including GTF2E1, GTF2E2, GTF2F1, GTF2F2, TCEA1, ERCC2, ERCC3, GTF2H2, GTF2H3, GTF2H4, GTF2H5, GTF2A1, GTF2A2, GTF2B and TBP; this large multi-subunit PIC complex mediates DNA unwinding and targets Pol II core to the transcription start site where the first phosphodiester bond forms. Component of a complex which is at least composed of HTATSF1/Tat-SF1, the P-TEFb complex components CDK9 and CCNT1, Pol II, SUPT5H, and NCL/nucleolin. The large PER complex involved in the repression of transcriptional termination is composed of at least PER2, CDK9, DDX5, DHX9, NCBP1 and POLR2A (active). Interacts (via the C-terminal domain (CTD)) with U2AF2; recruits PRPF19 and the Prp19 complex to the pre-mRNA and may couple transcription to pre-mRNA splicing. Interacts (via the C-terminal domain (CTD)) with SMN1/SMN2; recruits SMN1/SMN2 to RNA Pol II elongation complexes. Interacts via the phosphorylated C-terminal domain with WDR82 and with SETD1A and SETD1B only in the presence of WDR82. When phosphorylated at 'Ser-5', interacts with MEN1; the unphosphorylated form, or phosphorylated at 'Ser-2' does not interact. When phosphorylated at 'Ser-5', interacts with ZMYND8; the form phosphorylated at 'Ser-2' does not interact. When phosphorylated at 'Ser-2', interacts with SUPT6H (via SH2 domain). Interacts with RECQL5 and TCEA1; binding of RECQL5 prevents TCEA1 binding. The phosphorylated C-terminal domain interacts with FNBP3. The phosphorylated C-terminal domain interacts with SYNCRIP. Interacts with ATF7IP. Interacts with DDX5. Interacts with WWP2. Interacts with SETX. Interacts (phosphorylated) with PIH1D1. Interacts (via the C-terminal domain (CTD)) with TDRD3. Interacts with PRMT5. Interacts with XRN2. Interacts with SAFB/SAFB1. Interacts with CCNL1. Interacts with CCNL2. Interacts with MYO1C. Interacts with PAF1. Interacts with SFRS19. Interacts (via C-terminus) with CMTR1. Interacts (via C-terminus) with CTDSP1. Interacts (via C-terminus) with SCAF8. Interacts (via the C-terminal domain (CTD)) with CCNT2. Interacts with FUS. Interacts with MCM3AP isoform GANP. Interacts with kinase SRPK2; the interaction occurs during the co-transcriptional formation of inappropriate R-loops. Interacts with SETD2. Interacts with UVSSA. Interacts with ERCC6. Interacts with the TFIIH complex. Requires Mg(2+) as cofactor. In terms of processing, the tandem heptapeptide repeats in the C-terminal domain (CTD) can be highly phosphorylated. The phosphorylation activates Pol II. Phosphorylation occurs mainly at residues 'Ser-2' and 'Ser-5' of the heptapeptide repeat and is mediated, at least, by CDK7 and CDK9. POLR2A associated with DNA is specifically phosphorylated at 'Ser-5' of the CTD by CDK7, promoting transcription initiation by triggering dissociation from DNA. Phosphorylated at 'Ser-2', Ser-5' and 'Ser-7' of the CTD by CDK9 (P-TEFb complex), promoting transcription elongation. Phosphorylation also takes place at 'Ser-7' of the heptapeptide repeat, which is required for efficient transcription of snRNA genes and processing of the transcripts. The phosphorylation state is believed to result from the balanced action of site-specific CTD kinases and phosphatases, and a 'CTD code' that specifies the position of Pol II within the transcription cycle has been proposed. Dephosphorylated by the INTAC complex when transcripts are unfavorably configured for transcriptional elongation, leading to premature transcription termination: dephosphorylation is mediated by the PPP2CA component of the INTAC complex. In response to replication stress, dephosphorylated at 'Ser-5' of the CTD by the PNUTS-PP1 complex, promoting RNA polymerase II degradation. Dephosphorylated by the protein phosphatase CTDSP1. Dephosphorylated at 'Ser-2' following UV irradiation. Among tandem heptapeptide repeats of the C-terminal domain (CTD) some do not match the Y-S-P-T-S-P-S consensus, the seventh serine residue 'Ser-7' being replaced by a lysine. 'Lys-7' in these non-consensus heptapeptide repeats can be alternatively acetylated, methylated and dimethylated. EP300 is one of the enzyme able to acetylate 'Lys-7'. Acetylation at 'Lys-7' of non-consensus heptapeptide repeats is associated with 'Ser-2' phosphorylation and active transcription. Regulates initiation or early elongation steps of transcription specially for inducible genes. Post-translationally, methylated at Arg-1810 prior to transcription initiation when the CTD is hypophosphorylated, phosphorylation at Ser-1805 and Ser-1808 preventing this methylation. Symmetrically or asymmetrically dimethylated at Arg-1810 by PRMT5 and CARM1 respectively. Symmetric or asymmetric dimethylation modulates interactions with CTD-binding proteins like SMN1/SMN2 and TDRD3. SMN1/SMN2 interacts preferentially with the symmetrically dimethylated form while TDRD3 interacts with the asymmetric form. Through the recruitment of SMN1/SMN2, symmetric dimethylation is required for resolving RNA-DNA hybrids created by RNA polymerase II, that form R-loop in transcription terminal regions, an important step in proper transcription termination. CTD dimethylation may also facilitate the expression of select RNAs. Among tandem heptapeptide repeats of the C-terminal domain (CTD) some do not match the Y-S-P-T-S-P-S consensus, the seventh serine residue 'Ser-7' being replaced by a lysine. 'Lys-7' in these non-consensus heptapeptide repeats can be alternatively acetylated, methylated, dimethylated and trimethylated. Methylation occurs in the earliest transcription stages and precedes or is concomitant to 'Ser-5' and 'Ser-7' phosphorylation. Dimethylation and trimehtylation at 'Lys-7' of non-consensus heptapeptide repeats are exclusively associated with phosphorylated CTD. In terms of processing, following transcription stress, the elongating form of RNA polymerase II (RNA pol IIo) is ubiquitinated by the DCX(ERCC8) complex (also named CSA complex) on Lys-1268 at DNA damage sites without leading to degradation: ubiquitination promotes RNA pol IIo backtracking to allow access by the transcription-coupled nucleotide excision repair (TC-NER) machinery. At stalled RNA pol II where TC-NER has failed, RBX1-mediated polybiquitination at Lys-1268 may lead to proteasome-mediated degradation in a UBAP2- and UBAP2L-dependent manner; presumably to halt global transcription and enable 'last resort' DNA repair pathways. Ubiquitinated by the BCR(ARMC5) complex when transcripts are unfavorably configured for transcriptional elongation: the BCR(ARMC5) complex specifically catalyzes ubiquitination of POLR2A phosphorylated at 'Ser-5' of the C-terminal domain (CTD), leading to POLR2A degradation. Ubiquitination by the BCR(ARMC5) complex takes place at residues distinct from Lys-1268. Ubiquitinated by WWP2 leading to proteasomal degradation.

The protein localises to the nucleus. It localises to the cytoplasm. It is found in the chromosome. The enzyme catalyses RNA(n) + a ribonucleoside 5'-triphosphate = RNA(n+1) + diphosphate. The catalysed reaction is a 3'-end ribonucleotidyl-ribonucleotide-RNA + H2O = a 3'-end ribonucleotide-RNA + a ribonucleoside 5'-phosphate + H(+). Functionally, catalytic core component of RNA polymerase II (Pol II), a DNA-dependent RNA polymerase which synthesizes mRNA precursors and many functional non-coding RNAs using the four ribonucleoside triphosphates as substrates. Pol II-mediated transcription cycle proceeds through transcription initiation, transcription elongation and transcription termination stages. During transcription initiation, Pol II pre-initiation complex (PIC) is recruited to DNA promoters, with focused-type promoters containing either the initiator (Inr) element, or the TATA-box found in cell-type specific genes and dispersed-type promoters that often contain hypomethylated CpG islands usually found in housekeeping genes. Once the polymerase has escaped from the promoter it enters the elongation phase during which RNA is actively polymerized, based on complementarity with the template DNA strand. Transcription termination involves the release of the RNA transcript and polymerase from the DNA. Forms Pol II active center together with the second largest subunit POLR2B/RPB2. Appends one nucleotide at a time to the 3' end of the nascent RNA, with POLR2A/RPB1 most likely contributing a Mg(2+)-coordinating DxDGD motif, and POLR2B/RPB2 participating in the coordination of a second Mg(2+) ion and providing lysine residues believed to facilitate Watson-Crick base pairing between the incoming nucleotide and template base. Typically, Mg(2+) ions direct a 5' nucleoside triphosphate to form a phosphodiester bond with the 3' hydroxyl of the preceding nucleotide of the nascent RNA, with the elimination of pyrophosphate. The reversible pyrophosphorolysis can occur at high pyrophosphate concentrations. Can proofread the nascent RNA transcript by means of a 3' -&gt; 5' exonuclease activity. If a ribonucleotide is mis-incorporated, backtracks along the template DNA and cleaves the phosphodiester bond releasing the mis-incorporated 5'-ribonucleotide. Through its unique C-terminal domain (CTD, 52 heptapeptide tandem repeats) serves as a platform for assembly of factors that regulate transcription initiation, elongation and termination. CTD phosphorylation on Ser-5 mediates Pol II promoter escape, whereas phosphorylation on Ser-2 is required for Pol II pause release during transcription elongation and further pre-mRNA processing. Additionally, the regulation of gene expression levels depends on the balance between methylation and acetylation levels of the CTD-lysines. Initiation or early elongation steps of transcription of growth-factor-induced immediate early genes are regulated by the acetylation status of the CTD. Methylation and dimethylation have a repressive effect on target genes expression. Cooperates with mRNA splicing machinery in co-transcriptional 5'-end capping and co-transcriptional splicing of pre-mRNA. RNA-dependent RNA polymerase that catalyzes the extension of a non-coding RNA (ncRNA) at the 3'-end using the four ribonucleoside triphosphates as substrates. An internal ncRNA sequence near the 3'-end serves as a template in a single-round Pol II-mediated RNA polymerization reaction. May decrease the stability of ncRNAs that repress Pol II-mediated gene transcription. The sequence is that of DNA-directed RNA polymerase II subunit RPB1 (POLR2A) from Bos taurus (Bovine).